Consider the following 181-residue polypeptide: Oligoribonuclease (181 aa).

One can recognise an Exonuclease domain in the interval Leu-8–Leu-171. Residue Tyr-129 is part of the active site.

It belongs to the oligoribonuclease family.

The protein resides in the cytoplasm. 3'-to-5' exoribonuclease specific for small oligoribonucleotides. This chain is Oligoribonuclease, found in Vibrio parahaemolyticus serotype O3:K6 (strain RIMD 2210633).